A 591-amino-acid chain; its full sequence is uncharacterized protein (591 aa).

The first 30 residues, 1–30, serve as a signal peptide directing secretion; sequence MGKLLFGKLVFKKSLFLLSGMSSLAVFLTA. Residue Cys31 is the site of N-palmitoyl cysteine attachment. Residue Cys31 is the site of S-diacylglycerol cysteine attachment. Positions 476-488 are enriched in basic and acidic residues; that stretch reads KKKLSEVATKKNE. 2 disordered regions span residues 476–497 and 510–535; these read KKKLSEVATKKNENGSTKNGSN and SSSSTSMRNGSSDSNQQNFKTTDNDG. Residues 510-523 show a composition bias toward low complexity; it reads SSSSTSMRNGSSDS.

To T.pallidum TmpC.

It localises to the cell membrane. This is an uncharacterized protein from Mycoplasma genitalium (strain ATCC 33530 / DSM 19775 / NCTC 10195 / G37) (Mycoplasmoides genitalium).